The chain runs to 338 residues: Heat-inducible transcription repressor HrcA (338 aa).

Belongs to the HrcA family.

Negative regulator of class I heat shock genes (grpE-dnaK-dnaJ and groELS operons). Prevents heat-shock induction of these operons. This Streptomyces albus G protein is Heat-inducible transcription repressor HrcA.